Consider the following 400-residue polypeptide: Phosphoglycerate kinase (400 aa).

Residues 23–25 (DLN), R38, 61–64 (HFGR), R120, and R153 each bind substrate. ATP is bound by residues K203, E325, and 355-358 (GGDT).

Belongs to the phosphoglycerate kinase family. As to quaternary structure, monomer.

Its subcellular location is the cytoplasm. The catalysed reaction is (2R)-3-phosphoglycerate + ATP = (2R)-3-phospho-glyceroyl phosphate + ADP. Its pathway is carbohydrate degradation; glycolysis; pyruvate from D-glyceraldehyde 3-phosphate: step 2/5. In Agrobacterium fabrum (strain C58 / ATCC 33970) (Agrobacterium tumefaciens (strain C58)), this protein is Phosphoglycerate kinase.